The following is a 91-amino-acid chain: CLAVATA3/ESR (CLE)-related protein 27 (91 aa).

A signal peptide spans 1 to 35; sequence MTHAREWRSSLTTTLLMVILLSYMLHLFCVYSRVG. 2 positions are modified to hydroxyproline: Pro83 and Pro86. Pro86 carries O-linked (Ara...) hydroxyproline glycosylation.

Belongs to the CLV3/ESR signal peptide family. In terms of processing, the O-glycosylation (arabinosylation) of the hydroxyproline Pro-86 enhances binding affinity of the CLE27p peptide for its receptor. Mostly expressed in apex, and, to a lower extent, in roots, leaves, flowers and siliques.

Its subcellular location is the secreted. It localises to the extracellular space. Its function is as follows. Extracellular signal peptide that regulates cell fate. Represses root apical meristem maintenance. The chain is CLAVATA3/ESR (CLE)-related protein 27 from Arabidopsis thaliana (Mouse-ear cress).